Reading from the N-terminus, the 457-residue chain is Glycine receptor subunit alpha-1 (457 aa).

The signal sequence occupies residues 1–28 (MYSFNTLRFYLWETIVFFSLAASKEAEA). Topologically, residues 29–250 (ARSAPKPMSP…RFHLERQMGY (222 aa)) are extracellular. A glycan (N-linked (GlcNAc...) asparagine) is linked at asparagine 66. 2 residues coordinate glycine: arginine 93 and serine 157. Cysteine 166 and cysteine 180 are disulfide-bonded. Positions 220 and 222 each coordinate Zn(2+). Residues cysteine 226 and cysteine 237 are joined by a disulfide bond. Residue 230 to 235 (YNTGKF) participates in strychnine binding. Residue threonine 232 participates in glycine binding. Histidine 243 contributes to the Zn(2+) binding site. A helical transmembrane segment spans residues 251 to 272 (YLIQMYIPSLLIVILSWISFWI). Topologically, residues 273–277 (NMDAA) are cytoplasmic. The chain crosses the membrane as a helical span at residues 278 to 298 (PARVGLGITTVLTMTTQSSGS). Residues 299–309 (RASLPKVSYVK) are Extracellular-facing. The chain crosses the membrane as a helical span at residues 310–330 (AIDIWMAVCLLFVFSALLEYA). Over 331 to 425 (AVNFVSRQHK…FIQRAKKIDK (95 aa)) the chain is Cytoplasmic. The segment at 391–410 (KGANNNNTTNPPPAPSKSPE) is disordered. The chain crosses the membrane as a helical span at residues 426–446 (ISRIGFPMAFLIFNMFYWIIY). Residues 447–457 (KIVRREDVHNK) are Extracellular-facing.

It belongs to the ligand-gated ion channel (TC 1.A.9) family. Glycine receptor (TC 1.A.9.3) subfamily. GLRA1 sub-subfamily. Interacts with GLRB to form heteropentameric channels; this is probably the predominant form in vivo. Heteropentamer composed of four GLRA1 subunits and one GLRB subunit. Heteropentamer composed of two GLRA1 and three GLRB. Heteropentamer composed of three GLRA1 and two GLRB. Homopentamer (in vitro). Both homopentamers and heteropentamers form functional ion channels, but their characteristics are subtly different. In terms of tissue distribution, detected in spinal cord neurons. Detected in brain stem neurons. Detected at lower levels in hippocampus and cerebellum. Detected in the inner plexiform layer of the retina (at protein level).

Its subcellular location is the postsynaptic cell membrane. The protein localises to the synapse. It is found in the perikaryon. It localises to the cell projection. The protein resides in the dendrite. Its subcellular location is the cell membrane. It carries out the reaction chloride(in) = chloride(out). With respect to regulation, channel opening is triggered by extracellular glycine. Channel characteristics depend on the subunit composition; heteropentameric channels are activated by lower glycine levels and display faster desensitization. Channel opening is also triggered by taurine and beta-alanine. Inhibited by strychnine. Strychnine binding locks the channel in a closed conformation and prevents channel opening in response to extracellular glycine. Inhibited by picrotoxin. Channel activity is enhanced by 5 uM Zn(2+) and inhibited by 100 uM Zn(2+). Subunit of heteromeric glycine-gated chloride channels. Plays an important role in the down-regulation of neuronal excitability. Contributes to the generation of inhibitory postsynaptic currents. Channel activity is potentiated by ethanol. Potentiation of channel activity by intoxicating levels of ethanol contribute to the sedative effects of ethanol. This Mus musculus (Mouse) protein is Glycine receptor subunit alpha-1 (Glra1).